We begin with the raw amino-acid sequence, 660 residues long: Chaperone protein DnaK (660 aa).

A Phosphothreonine; by autocatalysis modification is found at Thr201. Residues 599 to 660 (EAMQAQSASA…ADVEIVDKPE (62 aa)) are disordered. The segment covering 600 to 617 (AMQAQSASAAASSAANAQ) has biased composition (low complexity).

The protein belongs to the heat shock protein 70 family.

Functionally, acts as a chaperone. This Chlamydia trachomatis serovar A (strain ATCC VR-571B / DSM 19440 / HAR-13) protein is Chaperone protein DnaK.